A 385-amino-acid chain; its full sequence is Alanine--glyoxylate aminotransferase 1 (385 aa).

Lys-201 bears the N6-(pyridoxal phosphate)lysine mark. Arg-354 is a binding site for substrate.

It belongs to the class-V pyridoxal-phosphate-dependent aminotransferase family. In terms of assembly, homodimer. Pyridoxal 5'-phosphate serves as cofactor.

It carries out the reaction glyoxylate + L-alanine = glycine + pyruvate. It participates in amino-acid biosynthesis; glycine biosynthesis; glycine from glyoxylate: step 1/1. Its function is as follows. Has alanine:glyoxylate aminotransferase activity. The protein is Alanine--glyoxylate aminotransferase 1 of Saccharomyces cerevisiae (strain ATCC 204508 / S288c) (Baker's yeast).